The primary structure comprises 278 residues: Transcription initiation factor TFIID subunit 9 (278 aa).

The tract at residues 193-278 (TTTKTVGSSG…EEEEFEFVTN (86 aa)) is disordered. A compositionally biased stretch (gly residues) spans 200 to 210 (SSGGSGGGGGQ). The segment covering 231–240 (AAAVGSIAGA) has biased composition (low complexity). Over residues 241–259 (SGSGAGSASGGGGGGGSSG) the composition is skewed to gly residues. The span at 269–278 (EEEEFEFVTN) shows a compositional bias: acidic residues.

It belongs to the TAF9 family. In terms of assembly, belongs to the TFIID complex which is composed of TATA binding protein (Tbp) and a number of TBP-associated factors (TAFs). Taf9 and Taf6 exist as a heterotetramer. Interacts with e(y)2.

It localises to the nucleus. Functionally, TFIID is a multimeric protein complex that plays a central role in mediating promoter responses to various activators and repressors. This is Transcription initiation factor TFIID subunit 9 from Drosophila melanogaster (Fruit fly).